The sequence spans 356 residues: Protein-glutamate methylesterase/protein-glutamine glutaminase 4 (356 aa).

The 118-residue stretch at 15-132 folds into the Response regulatory domain; it reads RVLVVDDSAV…SVGEMTADLV (118 aa). Aspartate 66 carries the post-translational modification 4-aspartylphosphate. The 187-residue stretch at 162-348 folds into the CheB-type methylesterase domain; sequence ARTTLQVVAI…PLDRIAPEIL (187 aa). Residues serine 174, histidine 200, and aspartate 296 contribute to the active site.

It belongs to the CheB family. In terms of processing, phosphorylated by CheA. Phosphorylation of the N-terminal regulatory domain activates the methylesterase activity.

It localises to the cytoplasm. The catalysed reaction is [protein]-L-glutamate 5-O-methyl ester + H2O = L-glutamyl-[protein] + methanol + H(+). It carries out the reaction L-glutaminyl-[protein] + H2O = L-glutamyl-[protein] + NH4(+). In terms of biological role, involved in chemotaxis. Part of a chemotaxis signal transduction system that modulates chemotaxis in response to various stimuli. Catalyzes the demethylation of specific methylglutamate residues introduced into the chemoreceptors (methyl-accepting chemotaxis proteins or MCP) by CheR. Also mediates the irreversible deamidation of specific glutamine residues to glutamic acid. The polypeptide is Protein-glutamate methylesterase/protein-glutamine glutaminase 4 (Anaeromyxobacter dehalogenans (strain 2CP-C)).